The primary structure comprises 115 residues: uncharacterized protein (115 aa).

The N-terminal stretch at Met1 to Asp29 is a signal peptide.

This is an uncharacterized protein from Bacillus subtilis (strain 168).